We begin with the raw amino-acid sequence, 425 residues long: Testicular acid phosphatase (425 aa).

Residues 1–27 (MAEPGSQGHTVGPLLLLLLLLLPRALP) form the signal peptide. Over 28 to 392 (EGPLLFVALV…EPASPPATVP (365 aa)) the chain is Extracellular. The Nucleophile role is filled by H40. Intrachain disulfides connect C158-C378, C213-C311, and C353-C357. D288 serves as the catalytic Proton donor. The chain crosses the membrane as a helical span at residues 393-413 (LLAGAVAVLAVLSLGLGLLAW). Topologically, residues 414 to 425 (RPRCLRALGGTV) are cytoplasmic.

The protein belongs to the histidine acid phosphatase family. In terms of assembly, homodimer. Glycosylated.

The protein localises to the membrane. It catalyses the reaction a phosphate monoester + H2O = an alcohol + phosphate. May dephosphorylate receptor tyrosine-protein kinase ERBB4 and inhibits its ligand-induced proteolytic cleavage. May play a role in odontogenesis. The protein is Testicular acid phosphatase of Mus musculus (Mouse).